A 273-amino-acid chain; its full sequence is Large ribosomal subunit protein uL2 (273 aa).

2 disordered regions span residues 28–53 (KPFA…TTRH) and 221–273 (RGTA…RRTK). The span at 39 to 48 (KSGGRNNNGR) shows a compositional bias: low complexity.

Belongs to the universal ribosomal protein uL2 family. As to quaternary structure, part of the 50S ribosomal subunit. Forms a bridge to the 30S subunit in the 70S ribosome.

Functionally, one of the primary rRNA binding proteins. Required for association of the 30S and 50S subunits to form the 70S ribosome, for tRNA binding and peptide bond formation. It has been suggested to have peptidyltransferase activity; this is somewhat controversial. Makes several contacts with the 16S rRNA in the 70S ribosome. This is Large ribosomal subunit protein uL2 from Pectobacterium atrosepticum (strain SCRI 1043 / ATCC BAA-672) (Erwinia carotovora subsp. atroseptica).